The following is a 565-amino-acid chain: NAD-dependent malic enzyme (565 aa).

The active-site Proton donor is tyrosine 104. Residue arginine 157 participates in NAD(+) binding. Lysine 175 acts as the Proton acceptor in catalysis. Residues glutamate 246, aspartate 247, and aspartate 270 each contribute to the a divalent metal cation site. Aspartate 270 and asparagine 418 together coordinate NAD(+).

This sequence belongs to the malic enzymes family. In terms of assembly, homotetramer. Mg(2+) serves as cofactor. Mn(2+) is required as a cofactor.

It catalyses the reaction (S)-malate + NAD(+) = pyruvate + CO2 + NADH. The enzyme catalyses oxaloacetate + H(+) = pyruvate + CO2. This Salmonella arizonae (strain ATCC BAA-731 / CDC346-86 / RSK2980) protein is NAD-dependent malic enzyme.